Reading from the N-terminus, the 277-residue chain is 2-dehydro-3-deoxyphosphooctonate aldolase (277 aa).

This sequence belongs to the KdsA family.

The protein localises to the cytoplasm. The catalysed reaction is D-arabinose 5-phosphate + phosphoenolpyruvate + H2O = 3-deoxy-alpha-D-manno-2-octulosonate-8-phosphate + phosphate. It participates in carbohydrate biosynthesis; 3-deoxy-D-manno-octulosonate biosynthesis; 3-deoxy-D-manno-octulosonate from D-ribulose 5-phosphate: step 2/3. It functions in the pathway bacterial outer membrane biogenesis; lipopolysaccharide biosynthesis. In Hydrogenovibrio crunogenus (strain DSM 25203 / XCL-2) (Thiomicrospira crunogena), this protein is 2-dehydro-3-deoxyphosphooctonate aldolase.